The primary structure comprises 158 residues: NAD(P)H-quinone oxidoreductase subunit J, chloroplastic (158 aa).

Belongs to the complex I 30 kDa subunit family. NDH is composed of at least 16 different subunits, 5 of which are encoded in the nucleus.

The protein resides in the plastid. The protein localises to the chloroplast thylakoid membrane. It catalyses the reaction a plastoquinone + NADH + (n+1) H(+)(in) = a plastoquinol + NAD(+) + n H(+)(out). It carries out the reaction a plastoquinone + NADPH + (n+1) H(+)(in) = a plastoquinol + NADP(+) + n H(+)(out). NDH shuttles electrons from NAD(P)H:plastoquinone, via FMN and iron-sulfur (Fe-S) centers, to quinones in the photosynthetic chain and possibly in a chloroplast respiratory chain. The immediate electron acceptor for the enzyme in this species is believed to be plastoquinone. Couples the redox reaction to proton translocation, and thus conserves the redox energy in a proton gradient. This is NAD(P)H-quinone oxidoreductase subunit J, chloroplastic from Daucus carota (Wild carrot).